The sequence spans 337 residues: MKIAVDAMGGDHAPKEIVLGVMKAVAQYKDVEILLFGDETKINEYLTDKTRVKIIHTDEKIESDDEPVRAVKRKKKASMVLAAQAVKDGEADACISAGNTGALMSTGLFVIGRIKGIDRPALAPTLPTVTGKGFVMLDLGANAEAKPEHLLQFGLMGSVYAEKVRKIDRPRVALLNIGTEETKGNDLTKKSFELMKNQDAYEFIGNIEARDLLMDVADVVVTDGFTGNMVLKSIEGTGAAFLSMLKMSLLNGFKNKVAASFLKKDLMALKAKMDYSEYGGACLFGVQAPVVKAHGSSNANGIFTTIRQVREMVEKQVVETIKAEVDKVKVGGTESND.

Belongs to the PlsX family. In terms of assembly, homodimer. Probably interacts with PlsY.

Its subcellular location is the cytoplasm. It carries out the reaction a fatty acyl-[ACP] + phosphate = an acyl phosphate + holo-[ACP]. It participates in lipid metabolism; phospholipid metabolism. In terms of biological role, catalyzes the reversible formation of acyl-phosphate (acyl-PO(4)) from acyl-[acyl-carrier-protein] (acyl-ACP). This enzyme utilizes acyl-ACP as fatty acyl donor, but not acyl-CoA. This is Phosphate acyltransferase from Listeria monocytogenes serotype 4b (strain F2365).